The sequence spans 233 residues: MGAGANNHEESSPLIPAAVAAPAYEKPPQAPAPEAANYYADGVPVVMGEPVSAHAFGGVPRESWNSGILSCLGRNDEFCSSDVEVCLLGTVAPCVLYGSNVERLAAGQGTFANSCLPYTGLYLLGNSLFGWNCLAPWFSHPTRTAIRQRYNLEGSFEAFTRQCGCCGDLVEDEERREHLEAACDLATHYLCHPCALCQEGRELRRRVPHPGFNNGHSVFVMMPPMEQTMGRGM.

2 helical membrane-spanning segments follow: residues 85–101 and 115–138; these read VCLL…GSNV and CLPY…APWF.

The protein belongs to the cornifelin family. As to expression, expressed in roots, coleoptiles, leaves, stalks, apical meristems, immature ears, embryos, endosperm, pericarp, silks, tassel spikelets and pollen. Highest expression in the pericarp and stalks.

It localises to the membrane. The sequence is that of Cell number regulator 8 (CNR8) from Zea mays (Maize).